The sequence spans 140 residues: Pro-variola growth factor (140 aa).

Residues 1-18 form the signal peptide; that stretch reads MSMKYLMLLFAAMIIRSF. The Extracellular segment spans residues 19-100; sequence ANSGNAIETT…SEKPNTTTSY (82 aa). Asparagine 34 carries an N-linked (GlcNAc...) asparagine; by host glycan. The region spanning 41-81 is the EGF-like domain; it reads AIRLCGPEGDRYCFHGICIHARDIDGMYCRCSHGYTGIRCQ. 3 disulfides stabilise this stretch: cysteine 45-cysteine 58, cysteine 53-cysteine 69, and cysteine 71-cysteine 80. Asparagine 95 is a glycosylation site (N-linked (GlcNAc...) asparagine; by host). Residues 101–121 traverse the membrane as a helical segment; it reads IPSPGIVLVLLVSIIVCCLLF. The Cytoplasmic segment spans residues 122-140; the sequence is VYRFTRRTNKLPLQDMVVP.

Belongs to the orthopoxvirus OPG019 family. As to quaternary structure, variola growth factor interacts with host EGFR and promotes EGFR dimerization.

It localises to the host membrane. It is found in the secreted. Its function is as follows. Stimulates cellular proliferation (hyperplasia)and mobility around infected cells to promote rapid and efficient spread of infection. This effect is beneficial for virus replication in vivo, because poxviruses replicate possibly better in proliferating cells than in quiescent cells. Acts by binding host EGFR, inducing its dimerization, autophosphorylation and leading to activation of several cellular pathways regulating cell proliferation or cell survival. The activation by host EGFR of mitogen activated protein kinases (MAPK) and extracellular-signal regulated kinases (ERK) are essential for the positive effect of vaccinia growth factor on poxvirus virulence in vivo. The chain is Pro-variola growth factor (OPG019) from Variola virus (isolate Human/India/Ind3/1967) (VARV).